Consider the following 559-residue polypeptide: Glucose-6-phosphate isomerase 4 (559 aa).

The active-site Proton donor is the glutamate 356. Catalysis depends on residues histidine 387 and lysine 513.

It belongs to the GPI family.

The protein resides in the cytoplasm. It carries out the reaction alpha-D-glucose 6-phosphate = beta-D-fructose 6-phosphate. Its pathway is carbohydrate biosynthesis; gluconeogenesis. The protein operates within carbohydrate degradation; glycolysis; D-glyceraldehyde 3-phosphate and glycerone phosphate from D-glucose: step 2/4. Its function is as follows. Catalyzes the reversible isomerization of glucose-6-phosphate to fructose-6-phosphate. The polypeptide is Glucose-6-phosphate isomerase 4 (Rhodococcus jostii (strain RHA1)).